A 947-amino-acid chain; its full sequence is Bifunctional glutamine synthetase adenylyltransferase/adenylyl-removing enzyme (947 aa).

An adenylyl removase region spans residues 1 to 440; that stretch reads MTPLSSPLSQ…VFNELIGDDE (440 aa). The tract at residues 450–947 is adenylyl transferase; the sequence is SEPWREVWQD…ASWRKWLVAV (498 aa).

This sequence belongs to the GlnE family. It depends on Mg(2+) as a cofactor.

The catalysed reaction is [glutamine synthetase]-O(4)-(5'-adenylyl)-L-tyrosine + phosphate = [glutamine synthetase]-L-tyrosine + ADP. The enzyme catalyses [glutamine synthetase]-L-tyrosine + ATP = [glutamine synthetase]-O(4)-(5'-adenylyl)-L-tyrosine + diphosphate. In terms of biological role, involved in the regulation of glutamine synthetase GlnA, a key enzyme in the process to assimilate ammonia. When cellular nitrogen levels are high, the C-terminal adenylyl transferase (AT) inactivates GlnA by covalent transfer of an adenylyl group from ATP to specific tyrosine residue of GlnA, thus reducing its activity. Conversely, when nitrogen levels are low, the N-terminal adenylyl removase (AR) activates GlnA by removing the adenylyl group by phosphorolysis, increasing its activity. The regulatory region of GlnE binds the signal transduction protein PII (GlnB) which indicates the nitrogen status of the cell. The polypeptide is Bifunctional glutamine synthetase adenylyltransferase/adenylyl-removing enzyme (Salmonella heidelberg (strain SL476)).